A 247-amino-acid polypeptide reads, in one-letter code: Eukaryotic translation initiation factor 6-1 (247 aa).

The protein belongs to the eIF-6 family. Monomer. Associates with the 60S ribosomal subunit.

Its subcellular location is the cytoplasm. The protein resides in the nucleus. The protein localises to the nucleolus. Functionally, binds to the 60S ribosomal subunit and prevents its association with the 40S ribosomal subunit to form the 80S initiation complex in the cytoplasm. May also be involved in ribosome biogenesis. In Arabidopsis thaliana (Mouse-ear cress), this protein is Eukaryotic translation initiation factor 6-1.